The following is a 71-amino-acid chain: Prophage lysis protein S homolog EssD (71 aa).

This sequence belongs to the lambda phage S protein family.

The polypeptide is Prophage lysis protein S homolog EssD (essD) (Escherichia coli (strain K12)).